Reading from the N-terminus, the 475-residue chain is Transmembrane protein 44 (475 aa).

Residues 1 to 29 (MGEAPSPAPALWDWDYLDRCFARHRVCIS) are Extracellular-facing. Residues 30–50 (FGLWICASSCWIAAHALLLYL) form a helical membrane-spanning segment. Topologically, residues 51 to 61 (RCAQKPRQDQS) are cytoplasmic. Residues 62–82 (ALCAACCLLTSLCDTVGALLA) form a helical membrane-spanning segment. At 83–88 (RQLTIQ) the chain is on the extracellular side. The chain crosses the membrane as a helical span at residues 89–109 (VFTGAYLAAIDLVNFMFILFP). Over 110-135 (VCGSKFKSNSDREARERKRRRQLRAS) the chain is Cytoplasmic. Residues 136-156 (VFALALPLSLGPCWALWVAVP) form a helical membrane-spanning segment. Topologically, residues 157–179 (KASATIRGPQRRLLASLLQENTE) are extracellular. Residues 180–200 (ILGYLLGSVAAFGSWASRIPP) traverse the membrane as a helical segment. Over 201 to 259 (LSRIAPPPTLGITTQHEIWRGQMSKPSQSPSRSPSGHWRAAAQRQVLGTEMCRGKTFPS) the chain is Cytoplasmic. A helical membrane pass occupies residues 260–280 (IHLWTRLLSALAGLLYASAIV). The Extracellular segment spans residues 281-294 (AHDQHPEYLLRATP). The chain crosses the membrane as a helical span at residues 295–315 (WFLTSLGRAALDLAIIFLSCV). The Cytoplasmic portion of the chain corresponds to 316–475 (MKSKMRQALG…VRTAHLSDDD (160 aa)). Positions 390–475 (SATRLPGDGQ…VRTAHLSDDD (86 aa)) are disordered. The span at 424–436 (SSGSSSEVSSINS) shows a compositional bias: low complexity. Basic and acidic residues predominate over residues 464-475 (DSVRTAHLSDDD). Ser465 carries the phosphoserine modification.

It is found in the membrane. This Homo sapiens (Human) protein is Transmembrane protein 44 (TMEM44).